Here is a 147-residue protein sequence, read N- to C-terminus: Leghemoglobin (147 aa).

The Globin domain maps to 2–147; that stretch reads GFTADQEALV…LASAIKKAMS (146 aa). Nitrated tyrosine is present on residues Tyr25 and Tyr30. A heme b-binding site is contributed by Ser45. Phosphoserine is present on Ser45. Position 62 (His62) interacts with O2. Positions 65, 94, and 97 each coordinate heme b. Residue Tyr135 is modified to Nitrated tyrosine.

Belongs to the plant globin family. Monomer. Post-translationally, nitrated in effective nodules and particularly in hypoxic conditions; this mechanism may play a protective role in the symbiosis by buffering toxic peroxynitrite NO(2)(-). Nitration level decrease during nodule senescence. In terms of processing, phosphorylation at Ser-45 disrupts the molecular environment of its porphyrin ring oxygen binding pocket, thus leading to a reduced oxygen consumption and to the delivery of oxygen O(2) to symbiosomes. Root nodules.

The protein localises to the cytoplasm. The protein resides in the cytosol. It is found in the nucleus. Its function is as follows. Leghemoglobin that reversibly binds oxygen O(2) through a pentacoordinated heme iron. In root nodules, facilitates the diffusion of oxygen to the bacteroids while preventing the bacterial nitrogenase from being inactivated by buffering dioxygen, nitric oxide and carbon monoxide, and promoting the formation of reactive oxygen species (ROS, e.g. H(2)O(2)). This role is essential for symbiotic nitrogen fixation (SNF). The chain is Leghemoglobin (LB3) from Medicago sativa (Alfalfa).